We begin with the raw amino-acid sequence, 152 residues long: Ribosomal RNA large subunit methyltransferase H (152 aa).

Residues L65, G96, and 115-120 contribute to the S-adenosyl-L-methionine site; that span reads LGPMTW.

It belongs to the RNA methyltransferase RlmH family. In terms of assembly, homodimer.

It is found in the cytoplasm. It catalyses the reaction pseudouridine(1915) in 23S rRNA + S-adenosyl-L-methionine = N(3)-methylpseudouridine(1915) in 23S rRNA + S-adenosyl-L-homocysteine + H(+). Its function is as follows. Specifically methylates the pseudouridine at position 1915 (m3Psi1915) in 23S rRNA. This Gluconacetobacter diazotrophicus (strain ATCC 49037 / DSM 5601 / CCUG 37298 / CIP 103539 / LMG 7603 / PAl5) protein is Ribosomal RNA large subunit methyltransferase H.